A 332-amino-acid chain; its full sequence is SLAM family member 6 (332 aa).

A signal peptide spans 1 to 21; sequence MLWLFQSLLFVFCFGPGNVVS. Residues 22 to 226 are Extracellular-facing; sequence QSSLTPLMVN…VKIQYTDTKM (205 aa). Residues 35 to 120 enclose the Ig-like V-type domain; the sequence is GESVTLPLEF…ISTKTSAKLS (86 aa). Residues asparagine 58, asparagine 87, asparagine 137, asparagine 144, asparagine 161, asparagine 178, and asparagine 203 are each glycosylated (N-linked (GlcNAc...) asparagine). The 78-residue stretch at 132–209 folds into the Ig-like C2-type domain; that stretch reads NIQVTNHSQL…AVSNLSFSVS (78 aa). Intrachain disulfides connect cysteine 147–cysteine 214 and cysteine 153–cysteine 195. A helical membrane pass occupies residues 227–247; that stretch reads ILFMVSGICIVFGFIILLLLV. Residues 248 to 331 are Cytoplasmic-facing; sequence LRKRRDSLSL…FSRATALDNV (84 aa). A Phosphotyrosine modification is found at tyrosine 274. Phosphoserine is present on serine 278. Short sequence motifs (ITSM) lie at residues 283 to 288 and 307 to 312; these read TVYASV and TIYSTI. The residue at position 309 (tyrosine 309) is a Phosphotyrosine.

In terms of assembly, homodimer. Interacts with PTN6. Interacts (phosphorylated) with PTN11. Interacts (phosphorylated on tyrosine residues) with SH2D1A/SAP and SH2D1B/EAT2; SH2D1A and SH2D1B can associate with the same SLAMF6 molecule; interaction with SH2D1B is mediated by ITSM 2. Phosphorylation in NK cells upon engagment by SLAMF6-expressing target cells is leading to receptor activation. As to expression, expressed by all (resting and activated) natural killer cells (NK), T- and B-lymphocytes. Increased surface expression on T-cells of systemic lupus erythematosus (SLE) patients.

Its subcellular location is the cell membrane. In terms of biological role, self-ligand receptor of the signaling lymphocytic activation molecule (SLAM) family. SLAM receptors triggered by homo- or heterotypic cell-cell interactions are modulating the activation and differentiation of a wide variety of immune cells and thus are involved in the regulation and interconnection of both innate and adaptive immune response. Activities are controlled by presence or absence of small cytoplasmic adapter proteins, SH2D1A/SAP and/or SH2D1B/EAT-2. Triggers cytolytic activity only in natural killer cells (NK) expressing high surface densities of natural cytotoxicity receptors. Positive signaling in NK cells implicates phosphorylation of VAV1. NK cell activation seems to depend on SH2D1B and not on SH2D1A. In conjunction with SLAMF1 controls the transition between positive selection and the subsequent expansion and differentiation of the thymocytic natural killer T (NKT) cell lineage. Promotes T-cell differentiation into a helper T-cell Th17 phenotype leading to increased IL-17 secretion; the costimulatory activity requires SH2D1A. Promotes recruitment of RORC to the IL-17 promoter. In conjunction with SLAMF1 and CD84/SLAMF5 may be a negative regulator of the humoral immune response. In the absence of SH2D1A/SAP can transmit negative signals to CD4(+) T-cells and NKT cells. Negatively regulates germinal center formation by inhibiting T-cell:B-cell adhesion; the function probably implicates increased association with PTPN6/SHP-1 via ITSMs in absence of SH2D1A/SAP. However, reported to be involved in maintaining B-cell tolerance in germinal centers and in preventing autoimmunity. This Homo sapiens (Human) protein is SLAM family member 6 (SLAMF6).